The chain runs to 321 residues: Cytochrome c biogenesis protein CcsA (321 aa).

Transmembrane regions (helical) follow at residues 1 to 21, 36 to 56, 70 to 90, 97 to 117, 143 to 163, 229 to 249, 256 to 276, and 290 to 310; these read MIFI…ISVV, LSSS…GLLI, LYES…ILEV, GLGA…TSGL, ILLS…FLII, VIGL…VWAN, WSWD…AIYL, and AIIA…VDLL.

The protein belongs to the CcmF/CycK/Ccl1/NrfE/CcsA family. As to quaternary structure, may interact with Ccs1.

Its subcellular location is the plastid. The protein resides in the chloroplast thylakoid membrane. Functionally, required during biogenesis of c-type cytochromes (cytochrome c6 and cytochrome f) at the step of heme attachment. This is Cytochrome c biogenesis protein CcsA from Cycas taitungensis (Prince sago).